Here is a 469-residue protein sequence, read N- to C-terminus: Cold shock protein CS66 (469 aa).

21 tandem repeats follow at residues 9-31 (GEKK…DHKE), 49-62 (TGGA…TGTT), 72-94 (GEKK…DHQQ), 95-108 (TGGT…TGTA), 115-128 (TGGT…TGTA), 135-148 (TNGT…TGTA), 149-162 (TGGS…TGVT), 170-192 (GEKK…DNQQ), 193-206 (TAGT…FATG), 213-226 (TGGT…AGVT), 234-256 (GEKK…DHQQ), 257-270 (TGGT…TGAA), 277-290 (GGGT…TGMT), 298-320 (GGKK…DNQQ), 321-334 (TGGA…TGAA), 341-354 (SGGT…TGMT), 362-384 (GEKK…DHQQ), 385-398 (TGGA…TGTA), 405-418 (GGGT…TGMT), 428-441 (TGGT…TGTT), and 452-469 (GEKK…PGQH). The 7 X 23 AA approximate repeats stretch occupies residues 9–390 (GEKKGIMEKI…DHQQTGGAYG (382 aa)). A 14 X 14 AA approximate repeats region spans residues 49–441 (TGGAYGQEGH…HGQHGHTGTT (393 aa)). Residues 87–112 (GGHADHQQTGGTYGQQGHTGTATHGT) are disordered. The segment covering 93–112 (QQTGGTYGQQGHTGTATHGT) has biased composition (low complexity). Low complexity predominate over residues 203 to 214 (FATGTHGTPATG). The disordered stretch occupies residues 203–469 (FATGTHGTPA…KIKDKLPGQH (267 aa)). Over residues 233–254 (TGEKKGLMENIKDKLPGGHGDH) the composition is skewed to basic and acidic residues. The segment covering 255 to 274 (QQTGGTYGQQGHTGAATHGT) has biased composition (low complexity). Over residues 288-301 (GMTGTGTHGTGGKK) the composition is skewed to gly residues. Basic and acidic residues predominate over residues 302–312 (GVMENIKDKLP). The segment covering 361–382 (TGEKKAVMENIKDKLPGGHGDH) has biased composition (basic and acidic residues). 2 stretches are compositionally biased toward low complexity: residues 383–402 (QQTG…THGT) and 412–429 (HGNT…TATG). A compositionally biased stretch (gly residues) spans 439–450 (GTTGTGTHGTDG). The span at 451–469 (VGEKKSLMDKIKDKLPGQH) shows a compositional bias: basic and acidic residues.

Belongs to the plant dehydrin family.

Functionally, may reduce intracellular freezing damage during winter by hydrogen-bonding to the lattice of the nascent ice crystals, thus modifying the structure and/or propagation of ice crystals. This chain is Cold shock protein CS66 (CS66), found in Triticum aestivum (Wheat).